The primary structure comprises 537 residues: T-complex protein 1 subunit theta (537 aa).

Belongs to the TCP-1 chaperonin family. Heterooligomeric complex.

It localises to the cytoplasm. Its function is as follows. Molecular chaperone; assists the folding of proteins upon ATP hydrolysis. Known to play a role, in vitro, in the folding of actin and tubulin. This is T-complex protein 1 subunit theta (cct8) from Dictyostelium discoideum (Social amoeba).